The following is a 395-amino-acid chain: Thyrotropin-releasing hormone receptor (395 aa).

Over 1–30 (MENGTGDEQNHTGLLLSSQEFVTAEYQVVT) the chain is Extracellular. N-linked (GlcNAc...) asparagine glycans are attached at residues Asn-3 and Asn-10. The chain crosses the membrane as a helical span at residues 31 to 53 (ILLVLLICGLGIVGNIMVVLVVL). Residues 54–63 (RTKHMRTPTN) lie on the Cytoplasmic side of the membrane. The chain crosses the membrane as a helical span at residues 64-85 (CYLVSLAVADLMVLVAAGLPNI). Residues 86 to 101 (TESLYKSWVYGYVGCL) lie on the Extracellular side of the membrane. A disulfide bond links Cys-100 and Cys-181. The helical transmembrane segment at 102-123 (CITYLQYLGINASSFSITAFTI) threads the bilayer. At 124-146 (ERYIAICHPIKAQFLCTFSRAKK) the chain is on the cytoplasmic side. Residues 147–170 (IIIFVWSFASVYCMLWFFLLDLNI) traverse the membrane as a helical segment. Residues 171-195 (AVYKDTTVVSCGYKVSRSYYSPIYM) lie on the Extracellular side of the membrane. Residues 196–217 (MDFGIFYVLPMVLATVLYGLIA) form a helical membrane-spanning segment. The Cytoplasmic portion of the chain corresponds to 218–268 (RILFLNPIPSDPKENSNTWKNDMAQQNKTVNSKMTNKSFNSTIASRRQVTK). Residues 269 to 290 (MLAVVVVLFAFLWMPYRTLVVV) traverse the membrane as a helical segment. Topologically, residues 291–298 (NSFLSSPF) are extracellular. A helical transmembrane segment spans residues 299-321 (QENWFLLFCRICIYLNSAINPVI). At 322 to 395 (YNLMSQKFRA…IGDTCLSSEA (74 aa)) the chain is on the cytoplasmic side.

The protein belongs to the G-protein coupled receptor 1 family.

The protein resides in the cell membrane. Its function is as follows. Receptor for thyrotropin-releasing hormone (TRH). Upon ligand binding, this G-protein-coupled receptor triggers activation of the phosphatidylinositol (IP3)-calcium-protein kinase C (PKC) pathway. The protein is Thyrotropin-releasing hormone receptor (TRHR) of Gallus gallus (Chicken).